The chain runs to 65 residues: Large ribosomal subunit protein uL29 (65 aa).

Belongs to the universal ribosomal protein uL29 family.

The protein is Large ribosomal subunit protein uL29 of Buchnera aphidicola subsp. Acyrthosiphon pisum (strain 5A).